We begin with the raw amino-acid sequence, 364 residues long: Fructose-bisphosphate aldolase A (364 aa).

At Y5 the chain carries Phosphotyrosine. Position 9 is a phosphothreonine (T9). A phosphoserine mark is found at S36 and S39. N6-acetyllysine; alternate is present on K42. Residue K42 forms a Glycyl lysine isopeptide (Lys-Gly) (interchain with G-Cter in SUMO1); alternate linkage. A Glycyl lysine isopeptide (Lys-Gly) (interchain with G-Cter in SUMO2); alternate cross-link involves residue K42. R43 serves as a coordination point for beta-D-fructose 1,6-bisphosphate. Residue S46 is modified to Phosphoserine. N6-(2-hydroxyisobutyryl)lysine is present on K99. The residue at position 108 (K108) is an N6-acetyllysine. At K111 the chain carries N6-acetyllysine; alternate. K111 carries the post-translational modification N6-malonyllysine; alternate. The residue at position 132 (S132) is a Phosphoserine. K147 bears the N6-(2-hydroxyisobutyryl)lysine mark. E188 functions as the Proton acceptor in the catalytic mechanism. The active-site Schiff-base intermediate with dihydroxyacetone-P is K230. S272 is modified (phosphoserine). Beta-D-fructose 1,6-bisphosphate contacts are provided by residues 272-274, S301, and R304; that span reads SGG. N6-malonyllysine is present on K312. N6-acetyllysine is present on K330.

Belongs to the class I fructose-bisphosphate aldolase family. In terms of assembly, homotetramer. Interacts with SNX9 and WAS. Interacts with FBP2; the interaction blocks FBP2 inhibition by physiological concentrations of AMP and reduces inhibition by Ca(2+).

The protein resides in the cytoplasm. Its subcellular location is the myofibril. It is found in the sarcomere. The protein localises to the i band. It localises to the m line. The enzyme catalyses beta-D-fructose 1,6-bisphosphate = D-glyceraldehyde 3-phosphate + dihydroxyacetone phosphate. It functions in the pathway carbohydrate degradation; glycolysis; D-glyceraldehyde 3-phosphate and glycerone phosphate from D-glucose: step 4/4. Its function is as follows. Catalyzes the reversible conversion of beta-D-fructose 1,6-bisphosphate (FBP) into two triose phosphate and plays a key role in glycolysis and gluconeogenesis. In addition, may also function as scaffolding protein. This is Fructose-bisphosphate aldolase A from Homo sapiens (Human).